The primary structure comprises 254 residues: Phosphate import ATP-binding protein PstB (254 aa).

Positions 7-249 (MVAESMSFYY…PREKQTEDYI (243 aa)) constitute an ABC transporter domain. 39–46 (GPSGCGKS) lines the ATP pocket.

This sequence belongs to the ABC transporter superfamily. Phosphate importer (TC 3.A.1.7) family. The complex is composed of two ATP-binding proteins (PstB), two transmembrane proteins (PstC and PstA) and a solute-binding protein (PstS).

It is found in the cell inner membrane. It carries out the reaction phosphate(out) + ATP + H2O = ADP + 2 phosphate(in) + H(+). Functionally, part of the ABC transporter complex PstSACB involved in phosphate import. Responsible for energy coupling to the transport system. This Chlorobium chlorochromatii (strain CaD3) protein is Phosphate import ATP-binding protein PstB.